The following is a 196-amino-acid chain: Small ribosomal subunit protein uS4c (196 aa).

The disordered stretch occupies residues 17–36 (ALPGLTRKTPKSGSNLKKKF). An S4 RNA-binding domain is found at 89 to 150 (MRLDNILFRL…NQRSKRLIQN (62 aa)).

Belongs to the universal ribosomal protein uS4 family. In terms of assembly, part of the 30S ribosomal subunit. Contacts protein S5. The interaction surface between S4 and S5 is involved in control of translational fidelity.

It localises to the plastid. It is found in the chloroplast. In terms of biological role, one of the primary rRNA binding proteins, it binds directly to 16S rRNA where it nucleates assembly of the body of the 30S subunit. Functionally, with S5 and S12 plays an important role in translational accuracy. The sequence is that of Small ribosomal subunit protein uS4c (rps4) from Phyllostachys flexuosa (Drooping timber bamboo).